Here is a 526-residue protein sequence, read N- to C-terminus: Rho guanine nucleotide exchange factor 3 (526 aa).

The interval 20–40 is disordered; sequence ELPPASGPAKDAEEPSNKRVK. Residues Ser47 and Ser70 each carry the phosphoserine modification. One can recognise a DH domain in the interval 122–304; that stretch reads KRQEAIFELS…QGIVAEINTK (183 aa). The 159-residue stretch at 291–449 folds into the PH domain; it reads INIIQGIVAE…WLNCIRQAKE (159 aa). The interval 464–526 is disordered; the sequence is EGSFLNPTTG…GNSRHGESNV (63 aa). The span at 466-475 shows a compositional bias: polar residues; the sequence is SFLNPTTGSR.

As to quaternary structure, interacts with RHOA and RHOB.

It is found in the cytoplasm. In terms of biological role, acts as a guanine nucleotide exchange factor (GEF) for RhoA and RhoB GTPases. In Pongo abelii (Sumatran orangutan), this protein is Rho guanine nucleotide exchange factor 3 (ARHGEF3).